The chain runs to 373 residues: Transaldolase (373 aa).

Lysine 143 acts as the Schiff-base intermediate with substrate in catalysis.

This sequence belongs to the transaldolase family. Type 2 subfamily.

It is found in the cytoplasm. It catalyses the reaction D-sedoheptulose 7-phosphate + D-glyceraldehyde 3-phosphate = D-erythrose 4-phosphate + beta-D-fructose 6-phosphate. It functions in the pathway carbohydrate degradation; pentose phosphate pathway; D-glyceraldehyde 3-phosphate and beta-D-fructose 6-phosphate from D-ribose 5-phosphate and D-xylulose 5-phosphate (non-oxidative stage): step 2/3. Transaldolase is important for the balance of metabolites in the pentose-phosphate pathway. This Mycobacterium marinum (strain ATCC BAA-535 / M) protein is Transaldolase.